The chain runs to 225 residues: Ribose-5-phosphate isomerase A (225 aa).

Substrate contacts are provided by residues Thr33 to Thr36, Asp86 to Asp89, and Lys99 to Gly102. Residue Glu108 is the Proton acceptor of the active site. Position 126 (Lys126) interacts with substrate.

This sequence belongs to the ribose 5-phosphate isomerase family. Homodimer.

The catalysed reaction is aldehydo-D-ribose 5-phosphate = D-ribulose 5-phosphate. It functions in the pathway carbohydrate degradation; pentose phosphate pathway; D-ribose 5-phosphate from D-ribulose 5-phosphate (non-oxidative stage): step 1/1. Its function is as follows. Catalyzes the reversible conversion of ribose-5-phosphate to ribulose 5-phosphate. The polypeptide is Ribose-5-phosphate isomerase A (Bordetella petrii (strain ATCC BAA-461 / DSM 12804 / CCUG 43448)).